An 82-amino-acid chain; its full sequence is UPF0291 protein LJ_1507 (82 aa).

The segment at 61 to 82 is disordered; sequence DGKEVTSEKAKEAQRRKGLRKD.

It belongs to the UPF0291 family.

It is found in the cytoplasm. This is UPF0291 protein LJ_1507 from Lactobacillus johnsonii (strain CNCM I-12250 / La1 / NCC 533).